The primary structure comprises 177 residues: Coatomer subunit zeta-1 (177 aa).

Position 1 is an N-acetylmethionine (Met1).

The protein belongs to the adaptor complexes small subunit family. Oligomeric complex that consists of at least the alpha, beta, beta', gamma, delta, epsilon and zeta subunits.

The protein localises to the cytoplasm. The protein resides in the golgi apparatus membrane. It is found in the cytoplasmic vesicle. It localises to the COPI-coated vesicle membrane. In terms of biological role, the coatomer is a cytosolic protein complex that binds to dilysine motifs and reversibly associates with Golgi non-clathrin-coated vesicles, which further mediate biosynthetic protein transport from the ER, via the Golgi up to the trans Golgi network. Coatomer complex is required for budding from Golgi membranes, and is essential for the retrograde Golgi-to-ER transport of dilysine-tagged proteins. The zeta subunit may be involved in regulating the coat assembly and, hence, the rate of biosynthetic protein transport due to its association-dissociation properties with the coatomer complex. The polypeptide is Coatomer subunit zeta-1 (COPZ1) (Bos taurus (Bovine)).